We begin with the raw amino-acid sequence, 206 residues long: Large ribosomal subunit protein uL3 (206 aa).

A disordered region spans residues 122–154 (VVKRHGHAGGPGGHGSRFHRHPGSMGANSTPSR).

Belongs to the universal ribosomal protein uL3 family. In terms of assembly, part of the 50S ribosomal subunit. Forms a cluster with proteins L14 and L19.

One of the primary rRNA binding proteins, it binds directly near the 3'-end of the 23S rRNA, where it nucleates assembly of the 50S subunit. The protein is Large ribosomal subunit protein uL3 of Leptospira borgpetersenii serovar Hardjo-bovis (strain JB197).